Consider the following 840-residue polypeptide: Leucine-zipper-like transcriptional regulator 1 (840 aa).

Ala2 is modified (N-acetylalanine). Kelch repeat units follow at residues 79–128, 130–185, 187–238, 239–285, 295–341, and 399–450; these read AIYV…VYGS, MFVF…VYSD, LWIF…VCRD, KMFV…QRRY, HLYV…PERA, and AMYI…FVLG. BTB domains follow at residues 443 to 537 and 667 to 736; these read CDVE…KYPR and CDIT…NMPP.

Belongs to the LZTR1 family. In terms of assembly, homodimer. Component of the BCR(LZTR1) E3 ubiquitin ligase complex, at least composed of CUL3, LZTR1 and RBX1. Interacts with Ras (K-Ras/KRAS, N-Ras/NRAS and H-Ras/HRAS). Interacts with RAF1. Interacts with SHOC2. Interacts with PPP1CB. Post-translationally, phosphorylated on tyrosine upon induction of apoptosis, leading to its degradation by the proteasome.

It is found in the endomembrane system. Its subcellular location is the recycling endosome. The protein localises to the golgi apparatus. Its pathway is protein modification; protein ubiquitination. In terms of biological role, substrate-specific adapter of a BCR (BTB-CUL3-RBX1) E3 ubiquitin-protein ligase complex that mediates ubiquitination of Ras (K-Ras/KRAS, N-Ras/NRAS and H-Ras/HRAS). Is a negative regulator of RAS-MAPK signaling that acts by controlling Ras levels and decreasing Ras association with membranes. The chain is Leucine-zipper-like transcriptional regulator 1 from Homo sapiens (Human).